Reading from the N-terminus, the 590-residue chain is 2-hydroxyacyl-CoA lyase (590 aa).

Residues G43, Q128, Q255, 273–274 (RS), and R362 each bind 2-hydroxyisobutanoyl-CoA. 410-412 (GDL) is a binding site for thiamine diphosphate. 2-hydroxyisobutanoyl-CoA is bound at residue R417. G433 is a thiamine diphosphate binding site. Residue D460 participates in Mg(2+) binding. Thiamine diphosphate contacts are provided by residues 461 to 462 (GA) and 487 to 492 (NRAWNI). Mg(2+) is bound by residues N487 and A489. The active-site Proton acceptor is E493. 561–564 (DSGK) lines the 2-hydroxyisobutanoyl-CoA pocket. The C-terminal lid stretch occupies residues 566–590 (LGFVPDYQALTPWNDAEVARRQEGI).

The protein belongs to the TPP enzyme family. As to quaternary structure, a homotetramer formed by a dimer of dimers; active sites are located in the dimer interface. It depends on Mg(2+) as a cofactor. Requires thiamine diphosphate as cofactor.

It catalyses the reaction 2-hydroxyisobutanoyl-CoA = formyl-CoA + acetone. Its activity is regulated as follows. Activity is stimulated by thiamine diphosphate. Functionally, a lyase that reversibly degrades 2-hydroxyisobutyryl-CoA (2-HIB-CoA) to acetone and formyl-CoA. Probably also cleaves 2-hydroxy-2-methylbutyryl-CoA to butanone and formyl-CoA. Does not act on 2-hydroxy-2-ethylbutyryl-CoA. A C-terminal lid closes the active site upon substrate binding, and with residues Leu-127 and Ile-492 restricts the size of the active site cavity so it can only use short-chain (C4 and C5) acyl substrates. Part of a pathway that allows cells to grow on 2-methylpropane-1,2-diol or 2-hydroxyisobutyric acid (2-HIBA) as a sole carbon source. In Actinomycetospora chiangmaiensis (strain DSM 45062 / JCM 15998 / CCTCC AA 205017 / NBRC 104400 / YIM 0006), this protein is 2-hydroxyacyl-CoA lyase.